The sequence spans 490 residues: Serine palmitoyltransferase 2 (490 aa).

A helical transmembrane segment spans residues 10–30; the sequence is VDDVGYLPILFLYIAYAFIIF. An N6-(pyridoxal phosphate)lysine modification is found at Lys-321.

It belongs to the class-II pyridoxal-phosphate-dependent aminotransferase family. In terms of assembly, forms a heterodimer with sptA. Pyridoxal 5'-phosphate is required as a cofactor.

Its subcellular location is the endoplasmic reticulum membrane. It carries out the reaction L-serine + hexadecanoyl-CoA + H(+) = 3-oxosphinganine + CO2 + CoA. The protein operates within lipid metabolism; sphingolipid metabolism. Functionally, catalytic subunit of serine palmitoyltransferase (SPT), which catalyzes the committed step in the synthesis of sphingolipids, the condensation of serine with palmitoyl CoA to form the long chain base 3-ketosphinganine. The protein is Serine palmitoyltransferase 2 (sptB) of Dictyostelium discoideum (Social amoeba).